Reading from the N-terminus, the 205-residue chain is Urease accessory protein UreG (205 aa).

A GTP-binding site is contributed by Gly12–Thr19.

It belongs to the SIMIBI class G3E GTPase family. UreG subfamily. As to quaternary structure, homodimer. UreD, UreF and UreG form a complex that acts as a GTP-hydrolysis-dependent molecular chaperone, activating the urease apoprotein by helping to assemble the nickel containing metallocenter of UreC. The UreE protein probably delivers the nickel.

The protein resides in the cytoplasm. Functionally, facilitates the functional incorporation of the urease nickel metallocenter. This process requires GTP hydrolysis, probably effectuated by UreG. This chain is Urease accessory protein UreG, found in Pseudomonas savastanoi pv. phaseolicola (strain 1448A / Race 6) (Pseudomonas syringae pv. phaseolicola (strain 1448A / Race 6)).